The following is a 1311-amino-acid chain: Suppressor of presenilin protein 4 (1311 aa).

The span at 1 to 11 (MSSEPTSSIES) shows a compositional bias: polar residues. 2 disordered regions span residues 1–58 (MSSE…DDLN) and 75–95 (MFEDDEEDTVSRRRTRRSTAH). 2 C2H2-type zinc fingers span residues 112-134 (HACHKCPSRYESKSSLANHTKMH) and 141-163 (FACELCDFSASTLKSLTHHNNIH). The interval 226–304 (EFDTTPPPIL…PPPVRKDVEK (79 aa)) is disordered. Residues 280-293 (SPKGSLPSSSASSV) are compositionally biased toward low complexity. 4 C2H2-type zinc fingers span residues 327–349 (QRCPHCPFTTSTVTRLNRHSGGH), 355–379 (YICPSENCNFMCRKAGFLQKHYILH), 451–476 (KKCNIGECEFLTQTLTQLIVHKVKTH), and 487–510 (FLCLTCGHRAKSYAALRTHKLIEH). A disordered region spans residues 544–563 (VKEEPKEADGDESGDESFDS). Over residues 552–561 (DGDESGDESF) the composition is skewed to acidic residues. 6 consecutive C2H2-type zinc fingers follow at residues 585-607 (FCCNMCPYKAPTMNRCQRHYDKH), 613-635 (FKCQYCSWSSRSKEVIVNHEKLH), 709-731 (FQCTDCPYTSKYRGDMRSHKKRH), 737-759 (YRCVQCTYTTNRPVSLKDHLKQH), 794-816 (YCCDKCPYVTLALGCLWRHHRNH), and 823-845 (NICSNCSYSSIDQRKMEEHTIIH). Positions 865–1002 (RPVSSLTDLN…ESPEPDESVE (138 aa)) are disordered. Residues 874–897 (NSEKMNERKSTKRKMLDKVEKMEV) are compositionally biased toward basic and acidic residues. Positions 898–907 (GEDEEDDEES) are enriched in acidic residues. The span at 908 to 920 (VDKGTDDGDYKQR) shows a compositional bias: basic and acidic residues. Positions 956–979 (NRINYSLLSKNGSGKPTPSTSSAN) are enriched in polar residues. C2H2-type zinc fingers lie at residues 1022 to 1044 (LKCPDCPYKSSEPDVLEKHRYYH), 1053 to 1075 (YACSDCTFNTYTPTALLQHLKLH), 1104 to 1126 (YYCKNCSFKTSIHRNFIEHSAYH), 1162 to 1184 (KYCKKCTFKCVSQSNFIEHLDRH), 1190 to 1212 (YKCYSCDYSDNTKSVVDFHQLNH), and 1261 to 1284 (LKCPSCEYFCHVSSELAFHMSVHH).

Expressed in neurons.

The protein localises to the nucleus. Probable transcriptional regulator, which participates in the transcriptional repression of the presenilin protein hop-1. Might play a role in the oxidative stress response. This Caenorhabditis elegans protein is Suppressor of presenilin protein 4 (spr-4).